The chain runs to 481 residues: Tagaturonate/fructuronate epimerase (481 aa).

Aspartate 161 (proton acceptor) is an active-site residue. Residue histidine 162 coordinates a divalent metal cation. The Proton donor role is filled by glutamate 266. Positions 308 and 341 each coordinate a divalent metal cation.

It belongs to the UxaE family. It depends on a divalent metal cation as a cofactor.

The catalysed reaction is keto-D-tagaturonate = keto-D-fructuronate. In terms of biological role, catalyzes the epimerization of D-tagaturonate (D-TagA) to D-fructuronate (D-FruA). This Thermotoga maritima (strain ATCC 43589 / DSM 3109 / JCM 10099 / NBRC 100826 / MSB8) protein is Tagaturonate/fructuronate epimerase.